The primary structure comprises 416 residues: Lysosome-associated membrane glycoprotein 3 (416 aa).

Positions methionine 1–alanine 27 are cleaved as a signal peptide. Over lysine 28–threonine 381 the chain is Lumenal. Asparagine 112, asparagine 158, asparagine 164, asparagine 200, asparagine 232, asparagine 266, and asparagine 291 each carry an N-linked (GlcNAc...) asparagine glycan. 2 disordered regions span residues proline 136 to threonine 167 and serine 179 to glutamine 219. Residues histidine 143–threonine 160 are compositionally biased toward low complexity. Positions proline 188–alanine 208 are enriched in low complexity. An intrachain disulfide couples cysteine 237 to cysteine 274. Residues cysteine 339 and cysteine 376 are joined by a disulfide bond. Residues isoleucine 382 to tyrosine 402 traverse the membrane as a helical segment. The Cytoplasmic portion of the chain corresponds to lysine 403–isoleucine 416.

The protein belongs to the LAMP family. In terms of assembly, monomer. Interacts with FURIN. (Microbial infection) Interacts with mumps virus protein F; this interaction promotes protein F cleavage by FURIN. In terms of tissue distribution, detected in tonsil interdigitating dendritic cells, in spleen, lymph node, Peyer's patches in the small instestine, in thymus medulla and in B-cells (at protein level). Expressed in lymphoid organs and dendritic cells. Expressed in lung. Up-regulated in carcinomas of the esophagus, colon, rectum, ureter, stomach, breast, fallopian tube, thyroid and parotid tissues.

It localises to the cell surface. Its subcellular location is the lysosome membrane. It is found in the cytoplasmic vesicle membrane. The protein resides in the early endosome membrane. In terms of biological role, lysosomal membrane glycoprotein which plays a role in the unfolded protein response (UPR) that contributes to protein degradation and cell survival during proteasomal dysfunction. Plays a role in the process of fusion of the lysosome with the autophagosome, thereby modulating the autophagic process. Promotes hepatocellular lipogenesis through activation of the PI3K/Akt pathway. May also play a role in dendritic cell function and in adaptive immunity. (Microbial infection) Plays a positive role in post-entry steps of influenza A virus replication, either virus uncoating, cytosolic transport, or nuclear import of viral components, and promotes nuclear accumulation of influenza nucleoprotein/NP at early stages of viral infection. Its function is as follows. (Microbial infection) Supports the FURIN-mediated cleavage of mumps virus fusion protein F by interacting with both FURIN and the unprocessed form but not the processed form of the viral protein F. Functionally, (Microbial infection) Promotes the intracellular proliferation of Salmonella typhimuium. The polypeptide is Lysosome-associated membrane glycoprotein 3 (LAMP3) (Homo sapiens (Human)).